A 229-amino-acid chain; its full sequence is Potassium/proton antiporter CemA (229 aa).

The next 3 membrane-spanning stretches (helical) occupy residues Leu-7 to Phe-27, Ile-106 to Leu-126, and Ile-189 to Ile-209.

It belongs to the CemA family.

It localises to the plastid. The protein resides in the chloroplast inner membrane. It carries out the reaction K(+)(in) + H(+)(out) = K(+)(out) + H(+)(in). Functionally, contributes to K(+)/H(+) antiport activity by supporting proton efflux to control proton extrusion and homeostasis in chloroplasts in a light-dependent manner to modulate photosynthesis. Prevents excessive induction of non-photochemical quenching (NPQ) under continuous-light conditions. Indirectly promotes efficient inorganic carbon uptake into chloroplasts. This is Potassium/proton antiporter CemA from Liriodendron tulipifera (Tuliptree).